The chain runs to 478 residues: Glutamine synthetase (478 aa).

The region spanning 16-100 (EKVEYVDVRF…INFFVHDPFT (85 aa)) is the GS beta-grasp domain. Positions 108-478 (PRNIARKAEN…PYEFALYYDV (371 aa)) constitute a GS catalytic domain. Positions 133 and 135 each coordinate Mg(2+). Glutamate 214 provides a ligand contact to ATP. The Mg(2+) site is built by glutamate 219 and glutamate 227. 230-232 (YQF) is a binding site for ATP. L-glutamate is bound by residues 271–272 (NG) and glycine 272. Histidine 276 serves as a coordination point for Mg(2+). ATP is bound by residues 278 to 280 (HQS) and serine 280. Residues arginine 329, glutamate 335, and arginine 347 each coordinate L-glutamate. Residues arginine 347, arginine 352, and lysine 361 each contribute to the ATP site. Residue glutamate 366 participates in Mg(2+) binding. Residue arginine 368 participates in L-glutamate binding. Tyrosine 406 is modified (O-AMP-tyrosine).

The protein belongs to the glutamine synthetase family. In terms of assembly, oligomer of 12 subunits arranged in the form of two hexagons. The cofactor is Mg(2+).

Its subcellular location is the cytoplasm. It catalyses the reaction L-glutamate + NH4(+) + ATP = L-glutamine + ADP + phosphate + H(+). With respect to regulation, when cellular nitrogen levels are high, the C-terminal adenylyl transferase (AT) of GlnE inhibits GlnA by covalent transfer of an adenylyl group from ATP to Tyr-406. Conversely, when nitrogen levels are low, the N-terminal adenylyl removase (AR) of GlnE activates GlnA by removing the adenylyl group by phosphorolysis. The fully adenylated enzyme complex is inactive. Involved in nitrogen metabolism via ammonium assimilation. Catalyzes the ATP-dependent biosynthesis of glutamine from glutamate and ammonia. Also plays a key role in controlling the ammonia levels within infected host cells and so contributes to the pathogens capacity to inhibit phagosome acidification and phagosome-lysosome fusion. Involved in cell wall biosynthesis via the production of the major component poly-L-glutamine (PLG). PLG synthesis in the cell wall occurs only in nitrogen limiting conditions and on the contrary high nitrogen conditions inhibit PLG synthesis. This Mycobacterium bovis (strain ATCC BAA-935 / AF2122/97) protein is Glutamine synthetase.